The chain runs to 206 residues: uncharacterized protein (206 aa).

The helical transmembrane segment at 4 to 24 threads the bilayer; sequence LLVVIAVALFIAAIVVLVVAI.

It is found in the membrane. This is an uncharacterized protein from Mycobacterium tuberculosis (strain CDC 1551 / Oshkosh).